Here is a 1390-residue protein sequence, read N- to C-terminus: Hepatocyte growth factor receptor (1390 aa).

Positions 1 to 24 (MKAPAVLAPGILVLLFTLVQRSNG) are cleaved as a signal peptide. Residues 25-932 (ECKEALAKSE…VIVQPDQNFT (908 aa)) are Extracellular-facing. The Sema domain maps to 27–515 (KEALAKSEMN…TGKKITKIPL (489 aa)). Residue N45 is glycosylated (N-linked (GlcNAc...) asparagine). 4 disulfides stabilise this stretch: C95–C101, C98–C160, C133–C141, and C172–C175. N106 is a glycosylation site (N-linked (GlcNAc...) asparagine). N149 is a glycosylation site (N-linked (GlcNAc...) asparagine). N-linked (GlcNAc...) asparagine glycosylation is present at N202. 2 cysteine pairs are disulfide-bonded: C298/C363 and C385/C397. N-linked (GlcNAc...) asparagine glycans are attached at residues N399 and N405. 4 disulfides stabilise this stretch: C520–C538, C526–C561, C529–C545, and C541–C551. 3 IPT/TIG domains span residues 563-655 (PAIY…FSYV), 657-739 (PVIT…FSYR), and 742-836 (PIVY…LIYV). Residue T582 is glycosylated (O-linked (Man) threonine). Residue N607 is glycosylated (N-linked (GlcNAc...) asparagine). The cysteines at positions 610 and 624 are disulfide-linked. N635 carries an N-linked (GlcNAc...) asparagine glycan. O-linked (Man) threonine glycosylation occurs at T676. A disulfide bridge connects residues C697 and C709. The O-linked (Man) threonine glycan is linked to T761. N-linked (GlcNAc...) asparagine glycans are attached at residues N785, N879, and N930. Residues 933–955 (GLIAGVVSISTALLLLLGFFLWL) traverse the membrane as a helical segment. The Cytoplasmic portion of the chain corresponds to 956–1390 (KKRKQIKDLG…TRPASFWETS (435 aa)). Phosphoserine is present on S966. T977 carries the post-translational modification Phosphothreonine. A phosphoserine mark is found at S990, S997, and S1000. Y1003 is subject to Phosphotyrosine. The Protein kinase domain occupies 1078 to 1345 (VHFNEVIGRG…RISAIFSTFI (268 aa)). ATP contacts are provided by residues 1084-1092 (IGRGHFGCV) and K1110. The Proton acceptor role is filled by D1204. The interaction with RANBP9 stretch occupies residues 1212–1390 (LDEKFTVKVA…TRPASFWETS (179 aa)). Position 1230 is a phosphotyrosine (Y1230). Y1234 and Y1235 each carry phosphotyrosine; by autocatalysis. T1289 carries the phosphothreonine modification. An interaction with MUC20 region spans residues 1320–1359 (WHPKAEMRPSFSELVSRISAIFSTFIGEHYVHVNATYVNV). Phosphotyrosine; by autocatalysis occurs at positions 1349 and 1356. Y1365 bears the Phosphotyrosine mark.

It belongs to the protein kinase superfamily. Tyr protein kinase family. As to quaternary structure, heterodimer made of an alpha chain (50 kDa) and a beta chain (145 kDa) which are disulfide linked. Binds PLXNB1. Interacts when phosphorylated with downstream effectors including STAT3, PIK3R1, SRC, PCLG1, GRB2 and GAB1. Interacts with SPSB1, SPSB2 and SPSB4. Interacts with INPP5D/SHIP1. When phosphorylated at Tyr-1356, interacts with INPPL1/SHIP2. Interacts with RANBP9 and RANBP10, as well as SPSB1, SPSB2, SPSB3 and SPSB4. SPSB1 binding occurs in the presence and in the absence of HGF, however HGF treatment has a positive effect on this interaction. Interacts with MUC20; prevents interaction with GRB2 and suppresses hepatocyte growth factor-induced cell proliferation. Interacts with GRB10. Interacts with PTPN1 and PTPN2. Interacts with LECT2; this interaction may have an antagonistic effect on receptor activation. Interacts with HSP90AA1 and HSP90AB1; the interaction suppresses MET kinase activity. Interacts with tensin TNS3. Interacts (when phosphorylated) with tensin TNS4 (via SH2 domain); the interaction increases MET protein stability by inhibiting MET endocytosis and subsequent lysosomal degradation. In terms of assembly, (Microbial infection) Interacts via extracytoplasmic residues 25-656 with L.monocytogenes InlB; MET can bind HGF, its endogenous ligand, and InlB simultaneously. InlB probably dimerizes upon binding to MET, which encourages subsequent dimerization of MET. Autophosphorylated in response to ligand binding on Tyr-1234 and Tyr-1235 in the kinase domain leading to further phosphorylation of Tyr-1349 and Tyr-1356 in the C-terminal multifunctional docking site. Dephosphorylated by PTPRJ at Tyr-1349 and Tyr-1365. Dephosphorylated by PTPN1 and PTPN2. Post-translationally, ubiquitinated. Ubiquitination by CBL regulates MET endocytosis, resulting in decreasing plasma membrane receptor abundance, and in endosomal degradation and/or recycling of internalized receptors. In terms of processing, O-mannosylation of IPT/TIG domains by TMEM260 is required for protein maturation. O-mannosylated residues are composed of single mannose glycans that are not elongated or modified. (Microbial infection) Tyrosine phosphorylation is stimulated by L.monocytogenes InlB. Tyrosine phosphorylation is maximal 10-20 minutes after treatment with InlB and disappears by 60 minutes. The phosphorylated residues were not identified. Expressed in normal hepatocytes as well as in epithelial cells lining the stomach, the small and the large intestine. Found also in basal keratinocytes of esophagus and skin. High levels are found in liver, gastrointestinal tract, thyroid and kidney. Also present in the brain. Expressed in metaphyseal bone (at protein level).

It localises to the membrane. The protein resides in the secreted. It catalyses the reaction L-tyrosyl-[protein] + ATP = O-phospho-L-tyrosyl-[protein] + ADP + H(+). With respect to regulation, in its inactive state, the C-terminal tail interacts with the catalytic domain and inhibits the kinase activity. Upon ligand binding, the C-terminal tail is displaced and becomes phosphorylated, thus increasing the kinase activity. Its function is as follows. Receptor tyrosine kinase that transduces signals from the extracellular matrix into the cytoplasm by binding to hepatocyte growth factor/HGF ligand. Regulates many physiological processes including proliferation, scattering, morphogenesis and survival. Ligand binding at the cell surface induces autophosphorylation of MET on its intracellular domain that provides docking sites for downstream signaling molecules. Following activation by ligand, interacts with the PI3-kinase subunit PIK3R1, PLCG1, SRC, GRB2, STAT3 or the adapter GAB1. Recruitment of these downstream effectors by MET leads to the activation of several signaling cascades including the RAS-ERK, PI3 kinase-AKT, or PLCgamma-PKC. The RAS-ERK activation is associated with the morphogenetic effects while PI3K/AKT coordinates prosurvival effects. During embryonic development, MET signaling plays a role in gastrulation, development and migration of neuronal precursors, angiogenesis and kidney formation. During skeletal muscle development, it is crucial for the migration of muscle progenitor cells and for the proliferation of secondary myoblasts. In adults, participates in wound healing as well as organ regeneration and tissue remodeling. Also promotes differentiation and proliferation of hematopoietic cells. May regulate cortical bone osteogenesis. In terms of biological role, (Microbial infection) Acts as a receptor for Listeria monocytogenes internalin InlB, mediating entry of the pathogen into cells. This chain is Hepatocyte growth factor receptor (MET), found in Homo sapiens (Human).